The following is a 250-amino-acid chain: Probable transcriptional regulatory protein RC1_1808 (250 aa).

The segment at 1 to 21 is disordered; sequence MAGHSQFKNIMHRKGAQDAKR.

This sequence belongs to the TACO1 family.

It localises to the cytoplasm. The sequence is that of Probable transcriptional regulatory protein RC1_1808 from Rhodospirillum centenum (strain ATCC 51521 / SW).